The primary structure comprises 431 residues: Tol-Pal system protein TolB (431 aa).

The signal sequence occupies residues 1-26 (MSLMTKLGFRALVASCLIAAGGAANA). The segment at 411–431 (PQILSVQGGSVREPSWGPFMQ) is disordered.

This sequence belongs to the TolB family. In terms of assembly, the Tol-Pal system is composed of five core proteins: the inner membrane proteins TolA, TolQ and TolR, the periplasmic protein TolB and the outer membrane protein Pal. They form a network linking the inner and outer membranes and the peptidoglycan layer.

It localises to the periplasm. Its function is as follows. Part of the Tol-Pal system, which plays a role in outer membrane invagination during cell division and is important for maintaining outer membrane integrity. The protein is Tol-Pal system protein TolB of Burkholderia vietnamiensis (strain G4 / LMG 22486) (Burkholderia cepacia (strain R1808)).